Reading from the N-terminus, the 627-residue chain is Pro-interleukin-16 (627 aa).

Disordered stretches follow at residues 34-136 (HMPL…SIKQ), 162-267 (SSGE…LTRS), and 316-337 (GASP…ETSG). Ser-217 carries the phosphoserine modification. The segment covering 318–337 (SPTSLSNEDSAANGCAETSG) has biased composition (polar residues). The tract at residues 401–497 (KQLDSIHVTI…IVTRKLTPET (97 aa)) is interaction with PPP1R12A, PPP1R12B and PPP1R12C. PDZ domains follow at residues 407–492 (HVTI…VTRK) and 529–614 (TVTL…IKRK).

As to quaternary structure, homotetramer. Pro-interleukin-16 interacts (via PDZ 2 domain) with PPP1R12A, PPP1R12B and PPP1R12C. Pro-interleukin-16 interacts with GRIN2A. Pro-interleukin-16 interacts with GABPB1. Pro-interleukin-16 interacts (via PDZ 3 domain) with HDAC3.

The protein resides in the secreted. It localises to the cytoplasm. It is found in the nucleus. Functionally, interleukin-16 stimulates a migratory response in CD4+ lymphocytes, monocytes, and eosinophils. Primes CD4+ T-cells for IL-2 and IL-15 responsiveness. Also induces T-lymphocyte expression of interleukin 2 receptor. Ligand for CD4. Its function is as follows. Pro-interleukin-16 is involved in cell cycle progression in T-cells. Appears to be involved in transcriptional regulation of SKP2 and is probably part of a transcriptional repression complex on the core promoter of the SKP2 gene. May act as a scaffold for GABPB1 (the DNA-binding subunit the GABP transcription factor complex) and HDAC3 thus maintaining transcriptional repression and blocking cell cycle progression in resting T-cells. The protein is Pro-interleukin-16 (IL16) of Saimiri sciureus (Common squirrel monkey).